The following is a 304-amino-acid chain: Ribosomal RNA large subunit methyltransferase F (304 aa).

This sequence belongs to the methyltransferase superfamily. METTL16/RlmF family.

It is found in the cytoplasm. The catalysed reaction is adenosine(1618) in 23S rRNA + S-adenosyl-L-methionine = N(6)-methyladenosine(1618) in 23S rRNA + S-adenosyl-L-homocysteine + H(+). Specifically methylates the adenine in position 1618 of 23S rRNA. In Klebsiella pneumoniae (strain 342), this protein is Ribosomal RNA large subunit methyltransferase F.